Here is a 469-residue protein sequence, read N- to C-terminus: MAQTLYDKLWNSHVVHTEEDGTALLYIDRQLLHEVTSPQAFEGLKLAQRPVWRISANLAVSDHNVPTTDRSHGIADPVSKLQVDTLDANCDAYGITQFKMNDVRQGIVHIIGPEQGATLPGMTIVCGDSHTSTHGAFGALAHGIGTSEVEHVLATQTLLQKKSKNMLVKVEGQLPRGCTAKDIVLAIIGQIGTAGGTGYAIEFGGSTIRALTMEGRMTVCNMAIEAGARAGMVAVDDTTVEYLKGRPFVPTGAEWDQAVEYWKTFRSDEGAQFDRVVELDAAQIVPQVTWGTSPEMVTSIDGRVPDPEREKDPVKRDAMERALAYMALAPNTPIEAIKVDKIFIGSCTNARIEDIRAAAYVVKKLNRRVAPNVRLAMVVPGSGLVKAQAEREGLDKVFTEAGFEWREPGCSMCLAMNADRLEPGERCASTSNRNFEGRQGQGGRTHLVSPAMAAAAAIEGHFVDIRRLG.

[4Fe-4S] cluster is bound by residues Cys-347, Cys-410, and Cys-413.

The protein belongs to the aconitase/IPM isomerase family. LeuC type 1 subfamily. In terms of assembly, heterodimer of LeuC and LeuD. [4Fe-4S] cluster serves as cofactor.

It carries out the reaction (2R,3S)-3-isopropylmalate = (2S)-2-isopropylmalate. It functions in the pathway amino-acid biosynthesis; L-leucine biosynthesis; L-leucine from 3-methyl-2-oxobutanoate: step 2/4. Its function is as follows. Catalyzes the isomerization between 2-isopropylmalate and 3-isopropylmalate, via the formation of 2-isopropylmaleate. This chain is 3-isopropylmalate dehydratase large subunit, found in Burkholderia mallei (strain NCTC 10247).